The sequence spans 423 residues: Tyrosine--tRNA ligase (423 aa).

Tyr35 is an L-tyrosine binding site. The 'HIGH' region motif lies at Pro40–His49. Residues Tyr170 and Gln174 each coordinate L-tyrosine. Positions Lys231–Ser235 match the 'KMSKS' region motif. Residue Lys234 coordinates ATP. The S4 RNA-binding domain occupies Gly353 to Val419.

Belongs to the class-I aminoacyl-tRNA synthetase family. TyrS type 1 subfamily. As to quaternary structure, homodimer.

It is found in the cytoplasm. The catalysed reaction is tRNA(Tyr) + L-tyrosine + ATP = L-tyrosyl-tRNA(Tyr) + AMP + diphosphate + H(+). In terms of biological role, catalyzes the attachment of tyrosine to tRNA(Tyr) in a two-step reaction: tyrosine is first activated by ATP to form Tyr-AMP and then transferred to the acceptor end of tRNA(Tyr). In Streptomyces griseus subsp. griseus (strain JCM 4626 / CBS 651.72 / NBRC 13350 / KCC S-0626 / ISP 5235), this protein is Tyrosine--tRNA ligase.